Consider the following 34-residue polypeptide: Corticostatin-2 (34 aa).

3 disulfide bridges follow: Cys-3/Cys-32, Cys-5/Cys-21, and Cys-11/Cys-31.

The protein belongs to the alpha-defensin family.

The protein localises to the secreted. In terms of biological role, microbicidal activity and inhibits corticotropin (ACTH) stimulated corticosterone production. In Oryctolagus cuniculus (Rabbit), this protein is Corticostatin-2.